A 700-amino-acid chain; its full sequence is Glutamine synthetase (700 aa).

The 91-residue stretch at 65–155 (YHFTPPGSSP…LPTAFCSYGG (91 aa)) folds into the GS beta-grasp domain. In terms of domain architecture, GS catalytic spans 159 to 589 (DRDSLLRSME…TMQEMIRKDL (431 aa)). Mg(2+) contacts are provided by E196, E198, E267, and E274. L-glutamate-binding positions include 318-319 (NG) and G319. Position 323 (H323) interacts with Mg(2+). S327 and R435 together coordinate ATP. R435 is a binding site for L-glutamate. E472 contacts Mg(2+).

Belongs to the glutamine synthetase family. Homohexamer. Mg(2+) is required as a cofactor.

The protein localises to the cytoplasm. It catalyses the reaction L-glutamate + NH4(+) + ATP = L-glutamine + ADP + phosphate + H(+). With respect to regulation, the activity of this enzyme is not controlled by adenylation. Catalyzes the ATP-dependent biosynthesis of glutamine from glutamate and ammonia. The chain is Glutamine synthetase from Butyrivibrio fibrisolvens.